Here is a 198-residue protein sequence, read N- to C-terminus: Recombination protein RecR (198 aa).

The C4-type zinc-finger motif lies at 57 to 72 (CSVCGHITDTDPCYIC). Positions 80-175 (SMICVVEETK…KVTRLAHGLP (96 aa)) constitute a Toprim domain.

The protein belongs to the RecR family.

In terms of biological role, may play a role in DNA repair. It seems to be involved in an RecBC-independent recombinational process of DNA repair. It may act with RecF and RecO. In Macrococcus caseolyticus (strain JCSC5402) (Macrococcoides caseolyticum), this protein is Recombination protein RecR.